The primary structure comprises 491 residues: Delayed-rectifier potassium channel regulatory subunit KCNS3 (491 aa).

Over 1-182 (MVFGEFFHRP…IRMENPAYCL (182 aa)) the chain is Cytoplasmic. A helical transmembrane segment spans residues 183-204 (SAKLIAISSLSVVLASIVAMCV). Residues 205 to 220 (HSMSEFQNEDGEVDDP) lie on the Extracellular side of the membrane. The helical transmembrane segment at 221–243 (VLEGVEIACIAWFTGELAIRLVA) threads the bilayer. Topologically, residues 244 to 254 (APSQKKFWKNP) are cytoplasmic. A helical membrane pass occupies residues 255–275 (LNIIDFVSIIPFYATLAVDTK). Over 276-285 (EEESEDIENM) the chain is Extracellular. The helical; Voltage-sensor transmembrane segment at 286–306 (GKVVQILRLMRIFRILKLARH) threads the bilayer. The Cytoplasmic segment spans residues 307-321 (SVGLRSLGATLRHSY). Residues 322 to 343 (HEVGLLLLFLSVGISIFSVLIY) form a helical membrane-spanning segment. Over 344-357 (SVEKDELASSLTSI) the chain is Extracellular. The segment at residues 358-369 (PICWWWATISMT) is an intramembrane region (helical). The short motif at 370 to 375 (TVGYGD) is the Selectivity filter element. An intramembrane segment occupies 370–377 (TVGYGDTH). At 378-384 (PVTLAGK) the chain is on the extracellular side. The chain crosses the membrane as a helical span at residues 385-413 (IIASTCIICGILVVALPITIIFNKFSKYY). Residues 414–491 (QKQKDMDVDQ…TASLENCTAK (78 aa)) lie on the Cytoplasmic side of the membrane.

Belongs to the potassium channel family. S (TC 1.A.1.2) subfamily. Kv9.3/KCNS3 sub-subfamily. As to quaternary structure, heterotetramer with KCNB1. Does not form homomultimers. As to expression, expressed in myocytes. Detected in lung, spleen, brain and heart.

The protein resides in the cell membrane. Functionally, potassium channel regulatory subunit that modulates the delayed rectifier potassium channel activity of KCNB1 by namely slowing down the deactivation and inactivation time constants. While it does not form functional channel on its own, it can form functional heterotetrameric channels with KCNB1. The polypeptide is Delayed-rectifier potassium channel regulatory subunit KCNS3 (Rattus norvegicus (Rat)).